Consider the following 542-residue polypeptide: GPI alpha-1,2-mannosyltransferase 3 (542 aa).

The interval 1–36 (MESQAADYNPASRNLHGSSGEMKLRRRKSRQYVSAQ) is disordered. 8 helical membrane-spanning segments follow: residues 52–72 (LVLF…TSFV), 125–145 (VQFL…VADI), 213–233 (LVAL…PLLF), 244–264 (HLTL…SLII), 304–324 (GFPV…FLAP), 327–347 (LHIL…LGHK), 351–371 (FIYP…AHLK), and 376–396 (AALS…GLVH). N-linked (GlcNAc...) asparagine glycosylation is present at Asn-480.

The protein belongs to the glycosyltransferase 22 family. PIGB subfamily.

Its subcellular location is the endoplasmic reticulum membrane. It functions in the pathway glycolipid biosynthesis; glycosylphosphatidylinositol-anchor biosynthesis. In terms of biological role, alpha-1,2-mannosyltransferase that catalyzes the transfer of the third mannose, via an alpha-1,2 bond, from a dolichol-phosphate-mannose (Dol-P-Man) to an alpha-D-Man-(1-&gt;6)-2-PEtn-alpha-D-Man-(1-&gt;4)-alpha-D-GlcN-(1-&gt;6)-(1-radyl,2-acyl-sn-glycero-3-phospho)-2-acyl-inositol intermediate to generate an alpha-D-Man-(1-&gt;2)-alpha-D-Man-(1-&gt;6)-2-PEtn-alpha-D-Man-(1-&gt;4)-alpha-D-GlcN-(1-&gt;6)-(1-radyl,2-acyl-sn-glycero-3-phospho)-2-acyl-inositol (also termed H6) and participates in the nineth step of the glycosylphosphatidylinositol-anchor biosynthesis. May also add the third mannose to an alpha-D-Man-(1-&gt;6)-alpha-D-Man-(1-&gt;4)-alpha-D-GlcN-(1-&gt;6)-(1-radyl,2-acyl-sn-glycero-3-phospho)-2-acyl-inositol (also termed H3) intermediate generating an alpha-D-Man-(1-&gt;2)-alpha-D-Man-(1-&gt;6)-alpha-D-Man-(1-&gt;4)-alpha-D-GlcN-(1-&gt;6)-(1-radyl,2-acyl-sn-glycero-3-phospho)-2-acyl-inositol (also termed H4). The chain is GPI alpha-1,2-mannosyltransferase 3 from Mus musculus (Mouse).